The primary structure comprises 668 residues: MSSVLDSKWTRSDASKTYDIDRWGAGYFSISDAGTVLVSPDRDPSQSIDLKELVDRLGQRNLDLPILLRFNGILRDRLRELDRCFKNAIHDHKYQSRYRCVFPIKVNQQREVVQQIVSEGARLGFGIEAGSKPELVAAVAMGDANVPIVCNGFKDEEFIRLALLAQRLGRNVLPVVEKVSELDLILDVAKDIGVRPTIGMRVKLATRGSGRWQASGGYRSKFGLTVAELLAQLDRLIAMDMGDCLQLLHFHVGSQIGNIRQLKSAILEAARIYVDLVRRGAGMRYLDVGGGLGVDYDGSRSDSESSMNYTMQEYANDVVYHTQTVCDEAGVPHPELISESGRAVAAHHSVLVMETLGVTSQGVANLPCWAKVEGEPVSPDHGGIEMDSVGAIETSEMEGPPESYEQPVHDLWVGYVNMTQANMMETFHDAQVALDLCMNLFSGGYLPLEQRVAAENLYFAICHRVRELAESMKERPDDLKHLDRMLSDIYFANFSLFQSMPDSWAIDQLFPIMPIHRLLEKPSRHAVLGDITCDSDGKVDAFVCGGGRQRTLMLHPLKSGEPYQLAVFMVGAYQEILGDLHNLFGDTHAVHVDIEDGVTKVRSIVKGDTVSEVLGYVQYEDRELIENLQESVESAIGNGHIDHQQAGETVAAYERALSGYTYLSTRTK.

Lys105 carries the N6-(pyridoxal phosphate)lysine modification. Residue Leu286–Tyr296 participates in substrate binding.

Belongs to the Orn/Lys/Arg decarboxylase class-II family. SpeA subfamily. Mg(2+) is required as a cofactor. Pyridoxal 5'-phosphate serves as cofactor.

It carries out the reaction L-arginine + H(+) = agmatine + CO2. Functionally, catalyzes the biosynthesis of agmatine from arginine. In Rhodopirellula baltica (strain DSM 10527 / NCIMB 13988 / SH1), this protein is Biosynthetic arginine decarboxylase.